A 237-amino-acid polypeptide reads, in one-letter code: Lectin alpha chain (237 aa).

The Mn(2+) site is built by Glu-8 and Asp-10. Asp-10, Tyr-12, Asn-14, and Asp-19 together coordinate Ca(2+). Tyr-12 is an a carbohydrate binding site. Mn(2+)-binding residues include Asp-19, His-24, and Ser-34. Leu-99–Tyr-100 serves as a coordination point for a carbohydrate. Asp-208 provides a ligand contact to Ca(2+). Arg-228 contributes to the a carbohydrate binding site.

It belongs to the leguminous lectin family. In terms of assembly, equilibrium between homodimer and homotetramer. Oligomerization is pH-dependent with homotetramers forming at pH 6.5 and above. In terms of processing, the beta and gamma chains are produced by partial proteolytic processing of the lectin alpha chain by an asparaginyl endopeptidase. Mixture of 60% alpha lectin and 40% of its beta and gamma proteolytic fragments.

D-mannose/D-glucose-binding lectin. Has anti-inflammatory activity in rats. Induces histamine release in mast cells from rat. Induces lymphocyte proliferation and IFNG production. This is Lectin alpha chain from Dioclea guianensis.